Reading from the N-terminus, the 537-residue chain is [Pyruvate dehydrogenase [acetyl-transferring]]-phosphatase 1, mitochondrial (537 aa).

Residues 1-71 constitute a mitochondrion transit peptide; sequence MPAPTQLFFP…WWQYTQGRRY (71 aa). A PPM-type phosphatase domain is found at 109-525; the sequence is ILGFDSNQLP…DDITIIVVQF (417 aa). 2 residues coordinate Mn(2+): aspartate 144 and glycine 145. An N6-acetyllysine modification is found at lysine 202. Mn(2+)-binding residues include aspartate 418 and aspartate 516.

The protein belongs to the PP2C family. Heterodimer of a catalytic (PDP1) and a regulatory (PDPR) subunit. Requires Mn(2+) as cofactor. It depends on Mg(2+) as a cofactor.

It is found in the mitochondrion. It catalyses the reaction O-phospho-L-seryl-[pyruvate dehydrogenase E1 alpha subunit] + H2O = L-seryl-[pyruvate dehydrogenase E1 alpha subunit] + phosphate. Magnesium-dependent and calcium-stimulated. PDP1 activity strongly depends on its Ca(2+)-dependent binding to the lipoyl domain of E2 subunit of component of the pyruvate dehydrogenase complex. Mitochondrial enzyme that catalyzes the dephosphorylation and concomitant reactivation of the alpha subunit of the E1 component of the pyruvate dehydrogenase complex (PDC), thereby stimulating the conversion of pyruvate into acetyl-CoA. The polypeptide is [Pyruvate dehydrogenase [acetyl-transferring]]-phosphatase 1, mitochondrial (Homo sapiens (Human)).